Reading from the N-terminus, the 152-residue chain is Ubiquitin-conjugating enzyme E2 A (152 aa).

The UBC core domain maps to 4 to 150; that stretch reads PARRRLMRDF…VSAIVEQSWR (147 aa). Cys88 acts as the Glycyl thioester intermediate in catalysis. Ser120 bears the Phosphoserine; by CDK9 mark.

The protein belongs to the ubiquitin-conjugating enzyme family. As to quaternary structure, interacts with RAD18 and WAC. Interacts with RFPL4A and CCNB1. Post-translationally, phosphorylation at Ser-120 by CDK9 increases activity towards histone H2B.

The protein resides in the late endosome. It is found in the lysosome. The catalysed reaction is S-ubiquitinyl-[E1 ubiquitin-activating enzyme]-L-cysteine + [E2 ubiquitin-conjugating enzyme]-L-cysteine = [E1 ubiquitin-activating enzyme]-L-cysteine + S-ubiquitinyl-[E2 ubiquitin-conjugating enzyme]-L-cysteine.. Its pathway is protein modification; protein ubiquitination. E2 ubiquitin-conjugating enzyme that accepts ubiquitin from the ubiquitin-activating enzyme E1 and transfers it to a E3 ubiquitin-protein ligase. In vitro catalyzes 'Lys-11', as well as 'Lys-48'-linked polyubiquitination. Together with the E3 enzyme BRE1 (RNF20 and/or RNF40), plays a role in transcription regulation by catalyzing the monoubiquitination of histone H2B at 'Lys-120' to form H2BK120ub1. H2BK120ub1 gives a specific tag for epigenetic transcriptional activation, elongation by RNA polymerase II, telomeric silencing, and is also a prerequisite for H3K4me and H3K79me formation. Involved in mitophagy by acting as a E2 ubiquitin-conjugating enzyme for PRKN. In association with the E3 enzyme UBR4, is involved in N-end rule-dependent protein degradation. In association with the E3 ubiquitin-protein ligase complex SIFI, inhibits the mitochondrial stress response by acting as a E2 ubiquitin-conjugating enzyme for UBR4 and KCMF1. The polypeptide is Ubiquitin-conjugating enzyme E2 A (Homo sapiens (Human)).